Here is a 174-residue protein sequence, read N- to C-terminus: FMN reductase (NADH) RutF (174 aa).

This sequence belongs to the non-flavoprotein flavin reductase family. RutF subfamily.

It carries out the reaction FMNH2 + NAD(+) = FMN + NADH + 2 H(+). Catalyzes the reduction of FMN to FMNH2 which is used to reduce pyrimidine by RutA via the Rut pathway. This Agrobacterium fabrum (strain C58 / ATCC 33970) (Agrobacterium tumefaciens (strain C58)) protein is FMN reductase (NADH) RutF.